Consider the following 224-residue polypeptide: Glycerol-3-phosphate acyltransferase (224 aa).

Transmembrane regions (helical) follow at residues 14–34 (INMIFYIVAFLFGGIPFGWLL), 70–90 (YLSILTIILDATKGLIVVLGA), 99–119 (TQWSIALLAILGHCYSPYLGF), 129–149 (IGSVLLLIPVEGICGLIIWGI), 162–182 (LIGVLGTIGLTFVLPYILPLP), and 185–205 (ISIIKQINTHTPLVLIGLFIF).

Belongs to the PlsY family. In terms of assembly, probably interacts with PlsX.

The protein resides in the cell inner membrane. It carries out the reaction an acyl phosphate + sn-glycerol 3-phosphate = a 1-acyl-sn-glycero-3-phosphate + phosphate. It functions in the pathway lipid metabolism; phospholipid metabolism. In terms of biological role, catalyzes the transfer of an acyl group from acyl-phosphate (acyl-PO(4)) to glycerol-3-phosphate (G3P) to form lysophosphatidic acid (LPA). This enzyme utilizes acyl-phosphate as fatty acyl donor, but not acyl-CoA or acyl-ACP. The polypeptide is Glycerol-3-phosphate acyltransferase (Helicobacter hepaticus (strain ATCC 51449 / 3B1)).